Here is a 124-residue protein sequence, read N- to C-terminus: Insulin-like growth factor 1 (124 aa).

The propeptide occupies 1-19 (IHFFYLGLCLLTLTSSAAA). The interval 20 to 48 (GPETLCGAELVDALQFVCGDRGFYFSKPT) is b. Disulfide bonds link Cys-25–Cys-67, Cys-37–Cys-80, and Cys-66–Cys-71. Residues 49-60 (GYGSSSRRLHHK) are c. Residues 61 to 81 (GIVDECCFQSCDLRRLEMYCA) are a. Positions 82-89 (PIKPPKSA) are d. The segment at 86–124 (PKSARSVRAQRHTDMPKAQKEVHLKNTSRGNTGNRNYRM) is disordered. The propeptide at 90–124 (RSVRAQRHTDMPKAQKEVHLKNTSRGNTGNRNYRM) is e peptide. Over residues 96 to 109 (RHTDMPKAQKEVHL) the composition is skewed to basic and acidic residues. Residues 110–124 (KNTSRGNTGNRNYRM) are compositionally biased toward polar residues.

Belongs to the insulin family.

The protein resides in the secreted. The insulin-like growth factors, isolated from plasma, are structurally and functionally related to insulin but have a much higher growth-promoting activity. Acts as a ligand for IGF1R. Binds to the alpha subunit of IGF1R, leading to the activation of the intrinsic tyrosine kinase activity which autophosphorylates tyrosine residues in the beta subunit thus initiatiating a cascade of down-stream signaling events leading to activation of the PI3K-AKT/PKB and the Ras-MAPK pathways. Binds to integrins. Its binding to integrins and subsequent ternary complex formation with integrins and IGFR1 are essential for IGF1 signaling. This is Insulin-like growth factor 1 from Coturnix japonica (Japanese quail).